We begin with the raw amino-acid sequence, 407 residues long: Tryptophan synthase beta chain (407 aa).

N6-(pyridoxal phosphate)lysine is present on lysine 91.

This sequence belongs to the TrpB family. Tetramer of two alpha and two beta chains. It depends on pyridoxal 5'-phosphate as a cofactor.

It catalyses the reaction (1S,2R)-1-C-(indol-3-yl)glycerol 3-phosphate + L-serine = D-glyceraldehyde 3-phosphate + L-tryptophan + H2O. It functions in the pathway amino-acid biosynthesis; L-tryptophan biosynthesis; L-tryptophan from chorismate: step 5/5. The beta subunit is responsible for the synthesis of L-tryptophan from indole and L-serine. This chain is Tryptophan synthase beta chain, found in Streptococcus pneumoniae serotype 2 (strain D39 / NCTC 7466).